We begin with the raw amino-acid sequence, 360 residues long: Geranylgeranyl pyrophosphate synthase 9, chloroplastic (360 aa).

The transit peptide at 1–39 (MATTVHLSSSSLFSQSRGRRDNSISSVKSLRKRTVLSLS) directs the protein to the chloroplast. Residues Lys-106, Arg-109, and His-138 each contribute to the isopentenyl diphosphate site. Residues Asp-145 and Asp-151 each contribute to the Mg(2+) site. Arg-156 provides a ligand contact to dimethylallyl diphosphate. Residue Arg-157 coordinates isopentenyl diphosphate. Residues Lys-245, Thr-246, Gln-283, Lys-300, and Lys-310 each contribute to the dimethylallyl diphosphate site.

The protein belongs to the FPP/GGPP synthase family. Monomer. No interactions with GGR. The cofactor is Mg(2+).

It is found in the plastid. The protein localises to the chloroplast. The catalysed reaction is isopentenyl diphosphate + dimethylallyl diphosphate = (2E)-geranyl diphosphate + diphosphate. It catalyses the reaction isopentenyl diphosphate + (2E)-geranyl diphosphate = (2E,6E)-farnesyl diphosphate + diphosphate. It carries out the reaction isopentenyl diphosphate + (2E,6E)-farnesyl diphosphate = (2E,6E,10E)-geranylgeranyl diphosphate + diphosphate. Its pathway is isoprenoid biosynthesis; farnesyl diphosphate biosynthesis; farnesyl diphosphate from geranyl diphosphate and isopentenyl diphosphate: step 1/1. It functions in the pathway isoprenoid biosynthesis; geranyl diphosphate biosynthesis; geranyl diphosphate from dimethylallyl diphosphate and isopentenyl diphosphate: step 1/1. It participates in isoprenoid biosynthesis; geranylgeranyl diphosphate biosynthesis; geranylgeranyl diphosphate from farnesyl diphosphate and isopentenyl diphosphate: step 1/1. Its function is as follows. Catalyzes the trans-addition of the three molecules of IPP onto DMAPP to form geranylgeranyl pyrophosphate. This Arabidopsis thaliana (Mouse-ear cress) protein is Geranylgeranyl pyrophosphate synthase 9, chloroplastic (GGPPS9).